The sequence spans 330 residues: Short chain dehydrogenase yanD (330 aa).

The NADP(+) site is built by Lys-57, Asp-86, Asn-113, Tyr-204, and Lys-208. The active-site Proton donor is Tyr-204. The active-site Lowers pKa of active site Tyr is the Lys-208.

It belongs to the short-chain dehydrogenases/reductases (SDR) family.

It functions in the pathway secondary metabolite biosynthesis; terpenoid biosynthesis. Its function is as follows. Short chain dehydrogenase; part of the gene cluster that mediates the biosynthesis of yanuthone D, a fungal isoprenoid epoxycyclohexenone that acts as an antibiotic against fungi and bacteria. The first step of the pathway is the synthesis of 6-methylsalicylic acid (6-MSA) by the polyketide synthase yanA. 6-MSA is then converted to m-cresol by the decarboxylase yanB. The cytochrome P450 monooxygenase yanC then catalyzes the oxidation of m-cresol to toluquinol. Epoxidation of toluquinol is then performed by the short chain dehydrogenase yanD, with the help of yanE, and a further prenylation by yanG leads to 7-deacetoxyyanuthone A. The next step is the hydroxylation of C-22 of 7-deacetoxyyanuthone A by the cytochrome P450 monooxygenase yanH to yield 22-deacetylyanuthone A. O-Mevalon transferase yanI then attaches mevalon to the hydroxyl group of 22-deacetylyanuthone A to produce yanuthone E. Finally, the FAD-dependent monooxygenase yanF oxidizes the hydroxyl group at C15 of yanuthone E to form yanuthone D. Furthermore, several branching points in the pathway lead to the production of yanuthones F and G from 7-deacetoxyyanuthone A; yanuthones H and I from 22-deacetylyanuthone A; and yanuthone J from yanuthone E. YanD is also involved in the synthesis of yanuthone X1 which does not have 6-methylsalicylic acid (6-MSA) as precursor. The protein is Short chain dehydrogenase yanD of Aspergillus niger (strain ATCC 1015 / CBS 113.46 / FGSC A1144 / LSHB Ac4 / NCTC 3858a / NRRL 328 / USDA 3528.7).